A 352-amino-acid polypeptide reads, in one-letter code: 4-hydroxy-2-oxovalerate aldolase (352 aa).

Residues 14–266 (VRMTDTSLRD…KTGIDFFDIA (253 aa)) form the Pyruvate carboxyltransferase domain. 22–23 (RD) is a binding site for substrate. Mn(2+) is bound at residue Asp23. Residue His26 is the Proton acceptor of the active site. 2 residues coordinate substrate: Ser176 and His205. Mn(2+) is bound by residues His205 and His207. Tyr296 provides a ligand contact to substrate.

The protein belongs to the 4-hydroxy-2-oxovalerate aldolase family.

The catalysed reaction is (S)-4-hydroxy-2-oxopentanoate = acetaldehyde + pyruvate. This Mycolicibacterium gilvum (strain PYR-GCK) (Mycobacterium gilvum (strain PYR-GCK)) protein is 4-hydroxy-2-oxovalerate aldolase.